A 246-amino-acid chain; its full sequence is tRNA pseudouridine synthase B (246 aa).

D44 acts as the Nucleophile in catalysis.

This sequence belongs to the pseudouridine synthase TruB family. Type 1 subfamily.

It carries out the reaction uridine(55) in tRNA = pseudouridine(55) in tRNA. In terms of biological role, responsible for synthesis of pseudouridine from uracil-55 in the psi GC loop of transfer RNAs. In Desulfotalea psychrophila (strain LSv54 / DSM 12343), this protein is tRNA pseudouridine synthase B.